The sequence spans 85 residues: DNA-directed RNA polymerase subunit Rpo11 (85 aa).

The protein belongs to the archaeal Rpo11/eukaryotic RPB11/RPC19 RNA polymerase subunit family. As to quaternary structure, part of the RNA polymerase complex.

The protein resides in the cytoplasm. The catalysed reaction is RNA(n) + a ribonucleoside 5'-triphosphate = RNA(n+1) + diphosphate. Functionally, DNA-dependent RNA polymerase (RNAP) catalyzes the transcription of DNA into RNA using the four ribonucleoside triphosphates as substrates. The chain is DNA-directed RNA polymerase subunit Rpo11 from Methanothermobacter thermautotrophicus (strain ATCC 29096 / DSM 1053 / JCM 10044 / NBRC 100330 / Delta H) (Methanobacterium thermoautotrophicum).